The sequence spans 21 residues: S-layer protein 2 (21 aa).

The protein localises to the secreted. It localises to the cell wall. The protein resides in the S-layer. In terms of biological role, the S-layer is a paracrystalline mono-layered assembly of proteins which coat the surface of bacteria. This Bacillus thuringiensis subsp. konkukian protein is S-layer protein 2.